The chain runs to 303 residues: MALAPTSSAISGSLRSSMLKLLMRLKSRTLATRLRLYEIIIEMQELGITRNEREIFYMDVNVFRTQSVVRRLVSSIASELQISKHDLGVRNTLKGIFIGRLGFVRHHGLGMVEMSSKGGCPQLIPDMSDIAEVLCDYKKTVVVEKDTVLQRIASEIEREKCLEEILFVCGKGYPCKNTVLLLKMIEHKTAVAGLFDLDPFGIHIFCIYKYGSKETPDIRVETIMRIGVCMEDVLEKNAYKDVFVKLNVHDLKMINRLVRFGELSADLLFLRKIDGKVEMEALFSKEPRRLRYFLFRMLERISS.

The Topo IIA-type catalytic domain occupies 1-96; it reads MALAPTSSAI…LGVRNTLKGI (96 aa). Tyrosine 57 acts as the O-(5'-phospho-DNA)-tyrosine intermediate in catalysis. Positions 144 and 196 each coordinate Mg(2+).

Belongs to the TOP6A family. It depends on Mg(2+) as a cofactor.

The protein localises to the nucleus. It carries out the reaction ATP-dependent breakage, passage and rejoining of double-stranded DNA.. Its function is as follows. Required for meiotic recombination. Mediates DNA cleavage that forms the double-strand breaks (DSB) that initiate meiotic recombination. The sequence is that of Probable meiosis-specific protein SPO11 homolog (SPO11) from Encephalitozoon cuniculi (strain GB-M1) (Microsporidian parasite).